A 347-amino-acid chain; its full sequence is Haptoglobin (347 aa).

The N-terminal stretch at 1–18 (MRALGAVVTLLLWGQLFA) is a signal peptide. Residues 31–88 (DSCPKPPEIANGYVEHLVRYRCRQFYRLRAEGDGVYTLNDEKQWMNTVAGEKLPECEA) form the Sushi domain. Disulfide bonds link Cys52–Cys86, Cys90–Cys207, Cys250–Cys281, and Cys292–Cys322. A Peptidase S1 domain is found at 103–345 (IIGGSMDAKG…LKDWVQETMA (243 aa)). Asn148, Asn182, and Asn264 each carry an N-linked (GlcNAc...) asparagine glycan. The interval 259-264 (VPEKKN) is interaction with CD163.

The protein belongs to the peptidase S1 family. In terms of assembly, tetramer of two alpha and two beta chains; disulfide-linked. The hemoglobin/haptoglobin complex is composed of a haptoglobin dimer bound to two hemoglobin alpha-beta dimers. Interacts with CD163. Interacts with ERGIC3. As to expression, expressed by the liver and secreted in plasma.

Its subcellular location is the secreted. Its function is as follows. As a result of hemolysis, hemoglobin is found to accumulate in the kidney and is secreted in the urine. Haptoglobin captures, and combines with free plasma hemoglobin to allow hepatic recycling of heme iron and to prevent kidney damage. Haptoglobin also acts as an antioxidant, has antibacterial activity and plays a role in modulating many aspects of the acute phase response. Hemoglobin/haptoglobin complexes are rapidly cleared by the macrophage CD163 scavenger receptor expressed on the surface of liver Kupfer cells through an endocytic lysosomal degradation pathway. The protein is Haptoglobin (Hp) of Mus caroli (Ryukyu mouse).